The chain runs to 210 residues: Protein GrpE (210 aa).

The protein belongs to the GrpE family. Homodimer.

The protein resides in the cytoplasm. Its function is as follows. Participates actively in the response to hyperosmotic and heat shock by preventing the aggregation of stress-denatured proteins, in association with DnaK and GrpE. It is the nucleotide exchange factor for DnaK and may function as a thermosensor. Unfolded proteins bind initially to DnaJ; upon interaction with the DnaJ-bound protein, DnaK hydrolyzes its bound ATP, resulting in the formation of a stable complex. GrpE releases ADP from DnaK; ATP binding to DnaK triggers the release of the substrate protein, thus completing the reaction cycle. Several rounds of ATP-dependent interactions between DnaJ, DnaK and GrpE are required for fully efficient folding. This is Protein GrpE from Rhizobium leguminosarum bv. trifolii (strain WSM2304).